The sequence spans 173 residues: Lens fiber membrane intrinsic protein (173 aa).

Residues 1-3 (MYS) lie on the Cytoplasmic side of the membrane. The chain crosses the membrane as a helical span at residues 4-24 (FMGGGLFCAWVGTILLVVATA). Residues 25–66 (TDHWMQYRLSGSFAHQGLWRYCLGNKCFLQTESIAYWNATRA) are Extracellular-facing. Residues Trp-43 and Trp-61 are each glycosylated (C-linked (Man) tryptophan). N-linked (GlcNAc...) asparagine glycosylation occurs at Asn-62. The chain crosses the membrane as a helical span at residues 67–87 (FMILSALCATSGIIMGVLAFA). Topologically, residues 88 to 98 (QQSTFTRLSRP) are cytoplasmic. Residues 99–119 (FSAGIMFFASTLFVLLALAIY) form a helical membrane-spanning segment. Residues 120–140 (TGVTVSFLGRRFGDWRFSWSY) lie on the Extracellular side of the membrane. A helical membrane pass occupies residues 141 to 161 (ILGWVALLMTFFAGIFYMCAY). The Cytoplasmic segment spans residues 162-173 (RMHECRRLSTPR). A Phosphoserine modification is found at Ser-170. Thr-171 carries the post-translational modification Phosphothreonine.

This sequence belongs to the PMP-22/EMP/MP20 family. In terms of assembly, seems to be associated with itself or another lens membrane component via disulfide bonds. In terms of tissue distribution, eye lens specific.

It localises to the membrane. Its function is as follows. Present in the thicker 16-17 nm junctions of mammalian lens fiber cells, where it may contribute to cell junctional organization. Acts as a receptor for calmodulin. May play an important role in both lens development and cataractogenesis. The sequence is that of Lens fiber membrane intrinsic protein (Lim2) from Rattus norvegicus (Rat).